We begin with the raw amino-acid sequence, 318 residues long: Cytochrome f (318 aa).

A signal peptide spans 1–33 (MKNTFSWIKKEITRSISLSLMIYIITRTSISNA). Heme is bound by residues Tyr34, Cys54, Cys57, and His58. The helical transmembrane segment at 284 to 304 (VQGLLFFLASVILAQIFLVLK) threads the bilayer.

The protein belongs to the cytochrome f family. The 4 large subunits of the cytochrome b6-f complex are cytochrome b6, subunit IV (17 kDa polypeptide, petD), cytochrome f and the Rieske protein, while the 4 small subunits are PetG, PetL, PetM and PetN. The complex functions as a dimer. Heme is required as a cofactor.

It is found in the plastid. The protein localises to the chloroplast thylakoid membrane. In terms of biological role, component of the cytochrome b6-f complex, which mediates electron transfer between photosystem II (PSII) and photosystem I (PSI), cyclic electron flow around PSI, and state transitions. The protein is Cytochrome f of Oenothera biennis (German evening primrose).